The sequence spans 409 residues: Thiaminase-1 (409 aa).

Residues 1 to 29 form the signal peptide; the sequence is MSKVKGFIYKPLMVMLALLLVVVSPAGAG. C143 serves as the catalytic Nucleophile. The Proton acceptor role is filled by E271.

As to quaternary structure, monomer.

It localises to the secreted. The enzyme catalyses pyridine + thiamine = heteropyrithiamine + 5-(2-hydroxyethyl)-4-methylthiazole. Degrades thiamine by replacing its thiazole moiety with a wide range of nucleophiles. The chain is Thiaminase-1 from Paenibacillus thiaminolyticus (Bacillus thiaminolyticus).